A 147-amino-acid polypeptide reads, in one-letter code: Methylglyoxal synthase (147 aa).

An MGS-like domain is found at 1–147 (MKGQRNIGMV…TPYVKRLGAK (147 aa)). Substrate is bound by residues histidine 12, lysine 16, 38–41 (TGTT), and 59–60 (SG). Aspartate 65 functions as the Proton donor/acceptor in the catalytic mechanism. Histidine 92 provides a ligand contact to substrate.

The protein belongs to the methylglyoxal synthase family.

The catalysed reaction is dihydroxyacetone phosphate = methylglyoxal + phosphate. Its function is as follows. Catalyzes the formation of methylglyoxal from dihydroxyacetone phosphate. The sequence is that of Methylglyoxal synthase from Oleidesulfovibrio alaskensis (strain ATCC BAA-1058 / DSM 17464 / G20) (Desulfovibrio alaskensis).